Reading from the N-terminus, the 371-residue chain is Cysteine proteinase EP-B 1 (371 aa).

An N-terminal signal peptide occupies residues 1–28 (MGLLSKKLLVASMVAAVLAVAAVELCSA). A propeptide spans 29-133 (IPMEDKDLES…FMYAALNVSD (105 aa)) (activation peptide). Asparagine 130 carries N-linked (GlcNAc...) asparagine glycosylation. Disulfide bonds link cysteine 155-cysteine 197, cysteine 189-cysteine 230, and cysteine 291-cysteine 343. Residue cysteine 158 is part of the active site. Catalysis depends on residues histidine 297 and asparagine 318.

Belongs to the peptidase C1 family.

The sequence is that of Cysteine proteinase EP-B 1 from Hordeum vulgare (Barley).